Consider the following 259-residue polypeptide: MLPTTSVSPRSPDNGILSPRDATRHTAGAKRYKYLRRLFHFKQMDFEFALWQMLYLFTSPQKVYRNFHYRKQTKDQWARDDPAFLVLLGIWLCVSTVGFGFVLDMSFFETFTLLLWVVFIDCVGVGLLIATSMWFVSNKYMVNRQGKDYDVEWGYTFDVHLNAFYPLLVILHFIQLFFINHVILTGWFIGCFVGNTLWLIAIGYYIYITFLGYSALPFLKNTVVLLYPFAALALLYILSLALGWNFTAKLCLFYKYRVR.

Positions 1-11 are enriched in polar residues; the sequence is MLPTTSVSPRS. The tract at residues 1 to 21 is disordered; sequence MLPTTSVSPRSPDNGILSPRD. Over 1 to 82 the chain is Cytoplasmic; sequence MLPTTSVSPR…TKDQWARDDP (82 aa). A helical membrane pass occupies residues 83-103; sequence AFLVLLGIWLCVSTVGFGFVL. At 104–109 the chain is on the lumenal side; the sequence is DMSFFE. Residues 110 to 130 traverse the membrane as a helical segment; it reads TFTLLLWVVFIDCVGVGLLIA. The Cytoplasmic portion of the chain corresponds to 131-158; that stretch reads TSMWFVSNKYMVNRQGKDYDVEWGYTFD. Residues 159 to 179 traverse the membrane as a helical segment; sequence VHLNAFYPLLVILHFIQLFFI. Topologically, residues 180-181 are lumenal; it reads NH. The chain crosses the membrane as a helical span at residues 182–202; sequence VILTGWFIGCFVGNTLWLIAI. Residues 203 to 222 lie on the Cytoplasmic side of the membrane; sequence GYYIYITFLGYSALPFLKNT. A helical transmembrane segment spans residues 223–243; sequence VVLLYPFAALALLYILSLALG. The Lumenal portion of the chain corresponds to 244–259; sequence WNFTAKLCLFYKYRVR.

The protein belongs to the unc-50 family.

It is found in the nucleus inner membrane. It localises to the golgi apparatus membrane. In terms of biological role, involved in the cell surface expression of neuronal nicotinic receptors. Binds RNA. The protein is Protein unc-50 homolog B (unc50-b) of Xenopus laevis (African clawed frog).